Consider the following 283-residue polypeptide: Elongation factor Ts (283 aa).

The tract at residues Thr80–Val83 is involved in Mg(2+) ion dislocation from EF-Tu.

Belongs to the EF-Ts family.

Its subcellular location is the cytoplasm. Its function is as follows. Associates with the EF-Tu.GDP complex and induces the exchange of GDP to GTP. It remains bound to the aminoacyl-tRNA.EF-Tu.GTP complex up to the GTP hydrolysis stage on the ribosome. In Pectobacterium atrosepticum (strain SCRI 1043 / ATCC BAA-672) (Erwinia carotovora subsp. atroseptica), this protein is Elongation factor Ts.